A 508-amino-acid chain; its full sequence is Hydroxymethylglutaryl-CoA synthase, mitochondrial (508 aa).

The N-terminal 37 residues, 1 to 37 (MQRLLTPVKRILQLTRAVQETSLTPARLLPVAHQRFS), are a transit peptide targeting the mitochondrion. Lys52 is modified (N6-succinyllysine). Glu80 and Ala81 together coordinate (3S)-3-hydroxy-3-methylglutaryl-CoA. Lys83 is modified (N6-acetyllysine; alternate). Residue Lys83 is modified to N6-succinyllysine; alternate. Glu132 serves as the catalytic Proton donor/acceptor. (3S)-3-hydroxy-3-methylglutaryl-CoA is bound by residues Cys166, Asn204, and Thr208. Cys166 (acyl-thioester intermediate) is an active-site residue. Lys221 carries the N6-succinyllysine modification. At Lys243 the chain carries N6-acetyllysine. Position 256 is an N6-acetyllysine; alternate (Lys256). Residue Lys256 is modified to N6-succinyllysine; alternate. Ser258 and His301 together coordinate (3S)-3-hydroxy-3-methylglutaryl-CoA. His301 acts as the Proton donor/acceptor in catalysis. Lys306 is modified (N6-acetyllysine). Lys310 contacts (3S)-3-hydroxy-3-methylglutaryl-CoA. N6-acetyllysine; alternate is present on Lys310. Lys310 carries the post-translational modification N6-succinyllysine; alternate. Lys333 is subject to N6-succinyllysine. N6-acetyllysine; alternate occurs at positions 342, 350, 354, and 358. N6-succinyllysine; alternate is present on residues Lys342, Lys350, Lys354, and Lys358. Residues Asn380 and Ser414 each contribute to the (3S)-3-hydroxy-3-methylglutaryl-CoA site. Residue Ser433 is modified to Phosphoserine. Lys437 carries the N6-acetyllysine modification. Position 440 is a phosphoserine (Ser440). Lys447 bears the N6-acetyllysine; alternate mark. Lys447 is subject to N6-succinyllysine; alternate. Ser456 carries the post-translational modification Phosphoserine. N6-acetyllysine; alternate is present on Lys473. Lys473 bears the N6-succinyllysine; alternate mark. Phosphoserine is present on Ser477.

This sequence belongs to the thiolase-like superfamily. HMG-CoA synthase family. In terms of assembly, homodimer. Succinylated. Desuccinylated by SIRT5. Succinylation, at least at Lys-83 and Lys-310, inhibits the enzymatic activity. In terms of tissue distribution, expression in liver is 200-fold higher than in any other tissue. Low expression in colon, kidney, testis, and pancreas. Very low expression in heart and skeletal muscle. Not detected in brain. Highest expression detected in heart and skeletal muscle.

Its subcellular location is the mitochondrion. The catalysed reaction is acetoacetyl-CoA + acetyl-CoA + H2O = (3S)-3-hydroxy-3-methylglutaryl-CoA + CoA + H(+). The protein operates within metabolic intermediate biosynthesis; (R)-mevalonate biosynthesis; (R)-mevalonate from acetyl-CoA: step 2/3. Its function is as follows. Catalyzes the first irreversible step in ketogenesis, condensing acetyl-CoA to acetoacetyl-CoA to form HMG-CoA, which is converted by HMG-CoA reductase (HMGCR) into mevalonate. This is Hydroxymethylglutaryl-CoA synthase, mitochondrial (HMGCS2) from Homo sapiens (Human).